A 279-amino-acid polypeptide reads, in one-letter code: Tryptophan synthase alpha chain (279 aa).

Catalysis depends on proton acceptor residues E50 and D61.

Belongs to the TrpA family. As to quaternary structure, tetramer of two alpha and two beta chains.

The enzyme catalyses (1S,2R)-1-C-(indol-3-yl)glycerol 3-phosphate + L-serine = D-glyceraldehyde 3-phosphate + L-tryptophan + H2O. Its pathway is amino-acid biosynthesis; L-tryptophan biosynthesis; L-tryptophan from chorismate: step 5/5. The alpha subunit is responsible for the aldol cleavage of indoleglycerol phosphate to indole and glyceraldehyde 3-phosphate. The polypeptide is Tryptophan synthase alpha chain (Brucella suis biovar 1 (strain 1330)).